A 95-amino-acid polypeptide reads, in one-letter code: Small ribosomal subunit protein uS19 (95 aa).

It belongs to the universal ribosomal protein uS19 family.

Protein S19 forms a complex with S13 that binds strongly to the 16S ribosomal RNA. This Lactobacillus gasseri (strain ATCC 33323 / DSM 20243 / BCRC 14619 / CIP 102991 / JCM 1131 / KCTC 3163 / NCIMB 11718 / NCTC 13722 / AM63) protein is Small ribosomal subunit protein uS19.